The chain runs to 519 residues: Cytochrome P450 CYP99A1 (519 aa).

Position 453 (cysteine 453) interacts with heme.

It belongs to the cytochrome P450 family. Heme is required as a cofactor.

The protein resides in the membrane. The sequence is that of Cytochrome P450 CYP99A1 (CYP99A1) from Sorghum bicolor (Sorghum).